A 71-amino-acid polypeptide reads, in one-letter code: Ribosome modulation factor (71 aa).

Belongs to the ribosome modulation factor family.

The protein resides in the cytoplasm. Functionally, during stationary phase, converts 70S ribosomes to an inactive dimeric form (100S ribosomes). In Pseudomonas savastanoi pv. phaseolicola (strain 1448A / Race 6) (Pseudomonas syringae pv. phaseolicola (strain 1448A / Race 6)), this protein is Ribosome modulation factor.